Reading from the N-terminus, the 1019-residue chain is Probable inorganic carbon transporter subunit DabA 1 (1019 aa).

Residues cysteine 491 and aspartate 493 each contribute to the Zn(2+) site. Residues 624–643 form a disordered region; the sequence is VPTRLHSPRDEGSAAGGEGQ. The Zn(2+) site is built by histidine 676 and cysteine 691.

This sequence belongs to the inorganic carbon transporter (TC 9.A.2) DabA family. As to quaternary structure, forms a complex with DabB. Requires Zn(2+) as cofactor.

It localises to the cell inner membrane. Part of an energy-coupled inorganic carbon pump. The chain is Probable inorganic carbon transporter subunit DabA 1 from Sorangium cellulosum (strain So ce56) (Polyangium cellulosum (strain So ce56)).